We begin with the raw amino-acid sequence, 192 residues long: uncharacterized protein (192 aa).

To R.meliloti RA0936 and y4nF.

This is an uncharacterized protein from Sinorhizobium fredii (strain NBRC 101917 / NGR234).